The primary structure comprises 225 residues: Superantigen-like protein 11 (225 aa).

The N-terminal stretch at 1-30 (MKLKNIAKASLALGILTTGMITTTAQPVKA) is a signal peptide. A sialyl Lewis X-binding region spans residues 94 to 196 (VDIFVVRENS…RITMKDGGFY (103 aa)).

Belongs to the staphylococcal/streptococcal toxin family. As to quaternary structure, homodimer (via its C-terminal domain). Interacts with host FCAR and SELPLG (via sialyl Lewis X).

The protein localises to the secreted. Functionally, secreted protein that plays a role in the inhibition of host immune system. Targets myeloid cells such as monocytes or granulocytes through binding with sialyllactosamine-containing glycoproteins. Prevents initial rolling of neutrophils toward the site of infection by interacting with host SELPLG. Disrupts neutrophil motility by induction of cell adhesion via interacting with glycans but independently of SELPLG. In Staphylococcus aureus (strain Newman), this protein is Superantigen-like protein 11.